Here is a 463-residue protein sequence, read N- to C-terminus: Polyadenylate-binding protein-interacting protein 1 (463 aa).

Residues 1–86 (MSDGFERAPG…HKRTSPAAQL (86 aa)) are disordered. Positions 145–362 (TEYVQDFLNH…LKLVELRSSN (218 aa)) constitute an MIF4G domain. Positions 420-442 (RDYDENGTDGGDSYFEDDDDNEM) are disordered. Acidic residues predominate over residues 433–442 (YFEDDDDNEM).

As to quaternary structure, interacts with the RRM1-RRM2 and C-terminal regions of epabp.

The protein resides in the cytoplasm. Functionally, acts as a coactivator in the regulation of translation initiation of poly(A)-containing mRNAs. In Xenopus laevis (African clawed frog), this protein is Polyadenylate-binding protein-interacting protein 1.